Here is a 297-residue protein sequence, read N- to C-terminus: Ribosomal protein L11 methyltransferase (297 aa).

Residues Thr139, Gly164, Asp186, and Asn233 each coordinate S-adenosyl-L-methionine.

The protein belongs to the methyltransferase superfamily. PrmA family.

The protein resides in the cytoplasm. It carries out the reaction L-lysyl-[protein] + 3 S-adenosyl-L-methionine = N(6),N(6),N(6)-trimethyl-L-lysyl-[protein] + 3 S-adenosyl-L-homocysteine + 3 H(+). Functionally, methylates ribosomal protein L11. The polypeptide is Ribosomal protein L11 methyltransferase (Trichodesmium erythraeum (strain IMS101)).